Consider the following 326-residue polypeptide: DNA-directed RNA polymerase subunit alpha (326 aa).

An alpha N-terminal domain (alpha-NTD) region spans residues 1–231; sequence MQTALLKPKI…DQLSVFAALE (231 aa). Residues 247–326 are alpha C-terminal domain (alpha-CTD); that stretch reads IDPILLRPVD…ENWPPAGLEK (80 aa).

It belongs to the RNA polymerase alpha chain family. As to quaternary structure, homodimer. The RNAP catalytic core consists of 2 alpha, 1 beta, 1 beta' and 1 omega subunit. When a sigma factor is associated with the core the holoenzyme is formed, which can initiate transcription.

The catalysed reaction is RNA(n) + a ribonucleoside 5'-triphosphate = RNA(n+1) + diphosphate. Functionally, DNA-dependent RNA polymerase catalyzes the transcription of DNA into RNA using the four ribonucleoside triphosphates as substrates. The chain is DNA-directed RNA polymerase subunit alpha from Cupriavidus metallidurans (strain ATCC 43123 / DSM 2839 / NBRC 102507 / CH34) (Ralstonia metallidurans).